A 187-amino-acid polypeptide reads, in one-letter code: GTP cyclohydrolase 1 (187 aa).

Positions 76, 79, and 148 each coordinate Zn(2+).

Belongs to the GTP cyclohydrolase I family. In terms of assembly, homomer.

The enzyme catalyses GTP + H2O = 7,8-dihydroneopterin 3'-triphosphate + formate + H(+). Its pathway is cofactor biosynthesis; 7,8-dihydroneopterin triphosphate biosynthesis; 7,8-dihydroneopterin triphosphate from GTP: step 1/1. In Streptococcus gordonii (strain Challis / ATCC 35105 / BCRC 15272 / CH1 / DL1 / V288), this protein is GTP cyclohydrolase 1.